Consider the following 515-residue polypeptide: Lysosomal acid glucosylceramidase (515 aa).

An N-terminal signal peptide occupies residues 1–19; that stretch reads MAARLIGFFLFQAVSWAYG. Intrachain disulfides connect cysteine 23–cysteine 35 and cysteine 37–cysteine 42. 2 N-linked (GlcNAc...) asparagine glycosylation sites follow: asparagine 38 and asparagine 78. An N-linked (GlcNAc...) (high mannose) asparagine glycan is attached at asparagine 165. Residue glutamate 254 is the Proton donor of the active site. Residue asparagine 289 is glycosylated (N-linked (GlcNAc...) asparagine). The active-site Nucleophile is glutamate 358. A glycan (N-linked (GlcNAc...) asparagine) is linked at asparagine 480.

It belongs to the glycosyl hydrolase 30 family. Interacts with saposin-C. Interacts with SCARB2. Interacts with TCP1. Interacts with GRN; this interaction prevents aggregation of GBA1-SCARB2 complex via interaction with HSPA1A upon stress.

It localises to the lysosome membrane. The catalysed reaction is a beta-D-glucosyl-(1&lt;-&gt;1')-N-acylsphing-4-enine + H2O = an N-acylsphing-4-enine + D-glucose. It carries out the reaction a beta-D-galactosyl-(1&lt;-&gt;1')-N-acylsphing-4-enine + H2O = an N-acylsphing-4-enine + D-galactose. The enzyme catalyses cholesteryl 3-beta-D-glucoside + H2O = cholesterol + D-glucose. It catalyses the reaction a beta-D-glucosyl-(1&lt;-&gt;1')-N-acylsphing-4-enine + cholesterol = cholesteryl 3-beta-D-glucoside + an N-acylsphing-4-enine. The catalysed reaction is beta-D-glucosyl-(1&lt;-&gt;1')-N-hexadecanoylsphing-4-enine + cholesterol = cholesteryl 3-beta-D-glucoside + N-hexadecanoylsphing-4-enine. It carries out the reaction beta-D-glucosyl-N-(9Z-octadecenoyl)-sphing-4E-enine + cholesterol = N-(9Z-octadecenoyl)-sphing-4-enine + cholesteryl 3-beta-D-glucoside. The enzyme catalyses beta-D-glucosyl-N-octanoylsphing-4E-enine + cholesterol = N-octanoylsphing-4-enine + cholesteryl 3-beta-D-glucoside. It catalyses the reaction beta-D-glucosyl-N-dodecanoylsphing-4-enine + cholesterol = N-dodecanoylsphing-4-enine + cholesteryl 3-beta-D-glucoside. The catalysed reaction is beta-D-glucosyl-(1&lt;-&gt;1)-N-octadecanoylsphing-4-enine + cholesterol = N-octadecanoylsphing-4-enine + cholesteryl 3-beta-D-glucoside. It carries out the reaction beta-D-glucosyl-(1&lt;-&gt;1')-N-(15Z-tetracosenoyl)-sphing-4-enine + cholesterol = N-(15Z-tetracosenoyl)-sphing-4-enine + cholesteryl 3-beta-D-glucoside. The enzyme catalyses a beta-D-galactosyl-(1&lt;-&gt;1')-N-acylsphing-4-enine + cholesterol = cholesteryl 3-beta-D-galactoside + an N-acylsphing-4-enine. It catalyses the reaction 1-(beta-D-galactosyl)-N-dodecanoylsphing-4-enine + cholesterol = cholesteryl 3-beta-D-galactoside + N-dodecanoylsphing-4-enine. The catalysed reaction is a beta-D-xylosyl-(1&lt;-&gt;1')-N-acylsphing-4-enine + cholesterol = cholesteryl 3-beta-D-xyloside + an N-acylsphing-4-enine. It carries out the reaction beta-D-xylosyl-(1&lt;-&gt;1')-N-(9Z-octadecenoyl)-sphing-4-enine + cholesterol = cholesteryl 3-beta-D-xyloside + N-(9Z-octadecenoyl)-sphing-4-enine. Its pathway is steroid metabolism; cholesterol metabolism. The protein operates within sphingolipid metabolism. With respect to regulation, inhibited by conduritol B epoxide/CBE. In terms of biological role, glucosylceramidase that catalyzes, within the lysosomal compartment, the hydrolysis of glucosylceramides/GlcCers (such as beta-D-glucosyl-(1&lt;-&gt;1')-N-acylsphing-4-enine) into free ceramides (such as N-acylsphing-4-enine) and glucose. Plays a central role in the degradation of complex lipids and the turnover of cellular membranes. Through the production of ceramides, participates in the PKC-activated salvage pathway of ceramide formation. Catalyzes the glucosylation of cholesterol, through a transglucosylation reaction where glucose is transferred from GlcCer to cholesterol. GlcCer containing mono-unsaturated fatty acids (such as beta-D-glucosyl-N-(9Z-octadecenoyl)-sphing-4-enine) are preferred as glucose donors for cholesterol glucosylation when compared with GlcCer containing same chain length of saturated fatty acids (such as beta-D-glucosyl-N-octadecanoyl-sphing-4-enine). Under specific conditions, may alternatively catalyze the reverse reaction, transferring glucose from cholesteryl 3-beta-D-glucoside to ceramide. Can also hydrolyze cholesteryl 3-beta-D-glucoside producing glucose and cholesterol. Catalyzes the hydrolysis of galactosylceramides/GalCers (such as beta-D-galactosyl-(1&lt;-&gt;1')-N-acylsphing-4-enine), as well as the transfer of galactose between GalCers and cholesterol in vitro, but with lower activity than with GlcCers. Contrary to GlcCer and GalCer, xylosylceramide/XylCer (such as beta-D-xyosyl-(1&lt;-&gt;1')-N-acylsphing-4-enine) is not a good substrate for hydrolysis, however it is a good xylose donor for transxylosylation activity to form cholesteryl 3-beta-D-xyloside. This is Lysosomal acid glucosylceramidase (Gba1) from Mus musculus (Mouse).